The sequence spans 128 residues: Transcription antitermination protein NusB (128 aa).

It belongs to the NusB family.

In terms of biological role, involved in transcription antitermination. Required for transcription of ribosomal RNA (rRNA) genes. Binds specifically to the boxA antiterminator sequence of the ribosomal RNA (rrn) operons. The chain is Transcription antitermination protein NusB from Staphylococcus haemolyticus (strain JCSC1435).